Reading from the N-terminus, the 1441-residue chain is Histone-lysine N-methyltransferase SETD5 (1441 aa).

The segment at 1–28 (MSIAIPLGVTTPDTSYSDMAAGSDPESV) is disordered. A Phosphothreonine modification is found at leucine 70. Residues serine 72 and valine 74 each carry the phosphoserine modification. The tract at residues 156–202 (TPTSITLTVRRTKPKKRKKSPEKGRAAPKTKKIKNSPSEAQNLDENT) is disordered. The span at 165–189 (RRTKPKKRKKSPEKGRAAPKTKKIK) shows a compositional bias: basic residues. Residues 190–202 (NSPSEAQNLDENT) are compositionally biased toward polar residues. Positions 269–390 (MQLQLGRVTR…KDAEVTIAFD (122 aa)) constitute an SET domain. Disordered stretches follow at residues 417–683 (NPNA…TVIS) and 793–816 (MTQT…ETSN). Composition is skewed to acidic residues over residues 450–461 (LEQQNEVPEENP) and 479–501 (EEVD…DDQE). 2 stretches are compositionally biased toward low complexity: residues 539 to 552 (SSSD…SSEI) and 561 to 572 (AAPESEVSSPVS). Residues 575–588 (AIPSTPQSTGVNTR) show a composition bias toward polar residues. The segment covering 611–621 (SRPRPKSRISR) has biased composition (basic residues). The segment covering 635–650 (QAIAQQAELSQAALEE) has biased composition (low complexity). Over residues 652 to 683 (GSNNSVTPPEAGNTDSSGENRQLTGSDPTVIS) the composition is skewed to polar residues. A phosphoserine mark is found at serine 829 and serine 852. Disordered regions lie at residues 849 to 883 (QPLS…ECRN), 1036 to 1228 (DLSR…SKGA), and 1243 to 1441 (CDSP…TGLS). Threonine 855 is subject to Phosphothreonine. A compositionally biased stretch (basic residues) spans 1062 to 1076 (QRKKVSLLEYRKRKQ). Positions 1087–1107 (DSSQSKSKSSGAGQGSSNSVS) are enriched in low complexity. The segment covering 1144-1163 (PSDSRGTSSSHCRPQENISS) has biased composition (polar residues). Phosphoserine is present on serine 1197. The span at 1250 to 1259 (SQSLLQQSSS) shows a compositional bias: low complexity. The segment covering 1265 to 1275 (PTQSPGYSYRT) has biased composition (polar residues). The span at 1284-1300 (PSHGSSESSLSSTSYPS) shows a compositional bias: low complexity. Positions 1319 to 1333 (YYSSQPHSGNSTGSN) are enriched in polar residues. The span at 1335–1372 (PRRSCSSSAASPTPQGPSDSPTSDSVSQSSTGTLSSTS) shows a compositional bias: low complexity. Polar residues-rich tracts occupy residues 1373–1382 (FPQNSRSSLP), 1389–1412 (SLPN…NSQH), and 1429–1441 (LQGS…TGLS).

In terms of assembly, interacts with components of the PAF1 complex (PAF1C) such as LEO1, CTR9 and CDC73. Interacts with NCOR1. Interacts with HDAC3. As to expression, ubiquitously expressed.

Its subcellular location is the nucleus. It is found in the chromosome. The enzyme catalyses L-lysyl(9)-[histone H3] + S-adenosyl-L-methionine = N(6)-methyl-L-lysyl(9)-[histone H3] + S-adenosyl-L-homocysteine + H(+). The catalysed reaction is L-lysyl(36)-[histone H3] + 3 S-adenosyl-L-methionine = N(6),N(6),N(6)-trimethyl-L-lysyl(36)-[histone H3] + 3 S-adenosyl-L-homocysteine + 3 H(+). Chromatin regulator required for brain development: acts as a regulator of RNA elongation rate, thereby regulating neural stem cell (NSC) proliferation and synaptic transmission. May act by mediating trimethylation of 'Lys-36' of histone H3 (H3K36me3), which is essential to allow on-time RNA elongation dynamics. Also monomethylates 'Lys-9' of histone H3 (H3K9me1) in vitro. The relevance of histone methyltransferase activity is however subject to discussion. The protein is Histone-lysine N-methyltransferase SETD5 of Mus musculus (Mouse).